Reading from the N-terminus, the 137-residue chain is Sch210972 biosynthesis cluster protein E (137 aa).

A compositionally biased stretch (polar residues) spans 1–12 (MTKYTSVNSSLP). The disordered stretch occupies residues 1 to 137 (MTKYTSVNSS…ASTIRPPCCG (137 aa)). A compositionally biased stretch (low complexity) spans 15 to 27 (PRQTTPTRPATQT). Residues 51 to 71 (GSLNGSPTLRTTLDTSLSGTR) are compositionally biased toward polar residues. Residues 94 to 109 (DEDHPHDPGPDSDAKK) are compositionally biased toward basic and acidic residues.

It functions in the pathway secondary metabolite biosynthesis. Functionally, part of the gene cluster that mediates the biosynthesis of the tetramic acid Sch210972, a potential anti-HIV fungal natural product that contains a decalin core. The PKS module of cghG together with the enoylreductase cghC catalyze the formation of the polyketide unit which is then conjugated to 4-hydroxyl-4-methyl glutamate (HMG) by the condensation domain of the cghG NRPS module. One unique structural feature of Sch210972 is the tetramic acid motif proposed to be derived from the non-proteinogenic amino acid HMG, by a Dieckmann-type condensation catalyzed by the reductase domain of cghG. The aldolase cghB catalyzes the aldol condensation of 2 molecules of pyruvic acid to yield the intermediate 4-hydroxyl-4-methyl-2-oxoglutarate (HMOG), which can then be stereoselectively transaminated by an unidentified enzyme to form HMG. The Diels-Alderase cghA then uses the Dieckmann product released by cghG as substrate and catalyzes the Diels-Alder cycloaddition to form the decalin ring of Sch210972. CghA also suppresses the nonenzymatic formation of the alternative stereoisomer. This chain is Sch210972 biosynthesis cluster protein E, found in Chaetomium globosum (strain ATCC 6205 / CBS 148.51 / DSM 1962 / NBRC 6347 / NRRL 1970) (Soil fungus).